The primary structure comprises 186 residues: Transcription factor FapR (186 aa).

Belongs to the FapR family.

In terms of biological role, transcriptional factor involved in regulation of membrane lipid biosynthesis by repressing genes involved in fatty acid and phospholipid metabolism. The sequence is that of Transcription factor FapR from Staphylococcus epidermidis (strain ATCC 35984 / DSM 28319 / BCRC 17069 / CCUG 31568 / BM 3577 / RP62A).